Here is a 1627-residue protein sequence, read N- to C-terminus: Pappalysin-1 (1627 aa).

The first 22 residues, 1–22, serve as a signal peptide directing secretion; sequence MRLWSWVLHLGLLSAALGCGLA. A propeptide spanning residues 23 to 81 is cleaved from the precursor; it reads ERPRRARRDPRAGRPPRPAAGPATCATRAARGRRASPPPPPPPGGAWEAVRVPRRRQQR. Residues 23-99 are disordered; the sequence is ERPRRARRDP…PSPPSRALYF (77 aa). Positions 42-51 are enriched in low complexity; it reads AGPATCATRA. Cystine bridges form between C144-C235, C327-C622, C332-C657, C414-C428, C424-C440, C457-C473, C474-C485, C583-C600, C587-C612, C710-C878, C713-C881, C753-C835, C775-C781, C947-C975, C960-C971, C983-C990, and C999-C1011. The interval 272–583 is metalloprotease; that stretch reads METHGAHTAL…FRGISEIQSC (312 aa). Residues N390 and N402 are each glycosylated (N-linked (GlcNAc...) asparagine). N429 carries an N-linked (GlcNAc...) asparagine glycan. A glycan (N-linked (GlcNAc...) asparagine) is linked at N480. H562 serves as a coordination point for Zn(2+). E563 is an active-site residue. Residues H566 and H572 each contribute to the Zn(2+) site. N-linked (GlcNAc...) asparagine glycosylation is found at N601, N619, and N725. A disordered region spans residues 733 to 754; that stretch reads SPSGHWSPREAEGHPDVEQPCK. Residues 739–751 are compositionally biased toward basic and acidic residues; sequence SPREAEGHPDVEQ. Residue N825 is glycosylated (N-linked (GlcNAc...) asparagine). N1026 carries an N-linked (GlcNAc...) asparagine glycan. 19 cysteine pairs are disulfide-bonded: C1036–C1070, C1051–C1139, C1192–C1205, C1215–C1269, C1227–C1238, C1242–C1280, C1285–C1329, C1300–C1310, C1314–C1342, C1346–C1399, C1362–C1373, C1377–C1410, C1415–C1458, C1428–C1438, C1442–C1471, C1478–C1539, C1492–C1502, C1506–C1554, and C1558–C1576. 5 consecutive Sushi domains span residues 1213-1282, 1283-1344, 1345-1412, 1413-1473, and 1476-1556; these read TDCP…ACEP, VDCS…LCEL, MCLA…ACVP, VTCD…VCQE, and GQCS…HCVK. N-linked (GlcNAc...) asparagine glycans are attached at residues N1222 and N1226. Residue N1323 is glycosylated (N-linked (GlcNAc...) asparagine). N1465 carries an N-linked (GlcNAc...) asparagine glycan. A glycan (N-linked (GlcNAc...) asparagine) is linked at N1519.

The protein belongs to the peptidase M43B family. In terms of assembly, homodimer; disulfide-linked. In pregnancy serum, predominantly found as a disulfide-linked 2:2 heterotetramer with the proform of PRG2. Zn(2+) serves as cofactor. There appear to be no free sulfhydryl groups. As to expression, high levels in placenta and pregnancy serum. In placenta, expressed in X cells in septa and anchoring villi, and in syncytiotrophoblasts in the chorionic villi. Lower levels are found in a variety of other tissues including kidney, myometrium, endometrium, ovaries, breast, prostate, bone marrow, colon, fibroblasts and osteoblasts.

Its subcellular location is the secreted. It carries out the reaction Cleavage of the 135-Met-|-Lys-136 bond in insulin-like growth factor binding protein (IGFBP)-4, and the 143-Ser-|-Lys-144 bond in IGFBP-5.. With respect to regulation, inhibited by complexation with the proform of PRG2. Its function is as follows. Metalloproteinase which specifically cleaves IGFBP-4 and IGFBP-5, resulting in release of bound IGF. Cleavage of IGFBP-4 is dramatically enhanced by the presence of IGF, whereas cleavage of IGFBP-5 is slightly inhibited by the presence of IGF. The chain is Pappalysin-1 (PAPPA) from Homo sapiens (Human).